Reading from the N-terminus, the 341-residue chain is Anthranilate phosphoribosyltransferase (341 aa).

Residues Gly-80, 83–84 (GD), Thr-88, 90–93 (NIST), 108–116 (KHGNRSVSS), and Ser-120 contribute to the 5-phospho-alpha-D-ribose 1-diphosphate site. Gly-80 serves as a coordination point for anthranilate. Residue Ser-92 participates in Mg(2+) binding. Asn-111 contacts anthranilate. Arg-166 lines the anthranilate pocket. 2 residues coordinate Mg(2+): Asp-225 and Glu-226.

It belongs to the anthranilate phosphoribosyltransferase family. As to quaternary structure, homodimer. Mg(2+) is required as a cofactor.

The catalysed reaction is N-(5-phospho-beta-D-ribosyl)anthranilate + diphosphate = 5-phospho-alpha-D-ribose 1-diphosphate + anthranilate. The protein operates within amino-acid biosynthesis; L-tryptophan biosynthesis; L-tryptophan from chorismate: step 2/5. In terms of biological role, catalyzes the transfer of the phosphoribosyl group of 5-phosphorylribose-1-pyrophosphate (PRPP) to anthranilate to yield N-(5'-phosphoribosyl)-anthranilate (PRA). The chain is Anthranilate phosphoribosyltransferase from Shouchella clausii (strain KSM-K16) (Alkalihalobacillus clausii).